We begin with the raw amino-acid sequence, 450 residues long: 23S rRNA (uracil(1939)-C(5))-methyltransferase RlmD (450 aa).

The TRAM domain occupies 1-62; it reads MPVAGPLEIV…PSYEQATLVD (62 aa). [4Fe-4S] cluster-binding residues include Cys75, Cys81, Cys84, and Cys163. Positions 271, 300, 305, 321, 349, and 370 each coordinate S-adenosyl-L-methionine. The Nucleophile role is filled by Cys406.

The protein belongs to the class I-like SAM-binding methyltransferase superfamily. RNA M5U methyltransferase family. RlmD subfamily.

It catalyses the reaction uridine(1939) in 23S rRNA + S-adenosyl-L-methionine = 5-methyluridine(1939) in 23S rRNA + S-adenosyl-L-homocysteine + H(+). Functionally, catalyzes the formation of 5-methyl-uridine at position 1939 (m5U1939) in 23S rRNA. The protein is 23S rRNA (uracil(1939)-C(5))-methyltransferase RlmD of Ralstonia nicotianae (strain ATCC BAA-1114 / GMI1000) (Ralstonia solanacearum).